The primary structure comprises 432 residues: Transcriptional adapter 3-A (432 aa).

2 disordered regions span residues 90-127 (HELG…RNMQ) and 275-314 (SPVE…TKSL). Positions 293–305 (DGASTSPRSQNKP) are enriched in polar residues. The stretch at 335–398 (ADDSEDEVLA…NEVMDAFRKI (64 aa)) forms a coiled coil.

It belongs to the NGG1 family.

The protein resides in the nucleus. Its function is as follows. Functions as a component of the PCAF complex. The PCAF complex is capable of efficiently acetylating histones in a nucleosomal context. This is Transcriptional adapter 3-A (tada3-a) from Xenopus laevis (African clawed frog).